The following is a 537-amino-acid chain: Intercellular adhesion molecule 1 (537 aa).

Positions 1–27 are cleaved as a signal peptide; it reads MASTRAKPTLPLLLALVTVVIPGPGDA. Topologically, residues 28–485 are extracellular; that stretch reads QVSIHPREAF…LTVLYHSQNN (458 aa). Ig-like C2-type domains are found at residues 41 to 102 and 127 to 195; these read GGSV…QSSA and GKDL…LDLR. Asn-47 carries N-linked (GlcNAc...) asparagine glycosylation. Cystine bridges form between Cys-48–Cys-91, Cys-52–Cys-95, and Cys-134–Cys-188. Positions 151–153 match the Cell attachment site; atypical motif; sequence RGE. A Cell attachment site motif is present at residues 179 to 181; sequence RGD. 9 N-linked (GlcNAc...) asparagine glycosylation sites follow: Asn-185, Asn-204, Asn-267, Asn-311, Asn-362, Asn-388, Asn-409, Asn-456, and Asn-469. Residues 232–299 enclose the Ig-like C2-type 3 domain; sequence GTQQKLFCSL…LRCVLELADQ (68 aa). Residues Cys-239 and Cys-292 are joined by a disulfide bond. The 55-residue stretch at 327 to 381 folds into the Ig-like C2-type 4 domain; that stretch reads GSQVTVKCEAHSGSKVVLLSGVEPRPPTPQVQFTLNASSEDHKRSFFCSAALEVA. Cys-334 and Cys-374 are oxidised to a cystine. Intrachain disulfides connect Cys-406/Cys-422, Cys-422/Cys-461, and Cys-434/Cys-461. The region spanning 415–468 is the Ig-like C2-type 5 domain; that stretch reads GSQQTLKCQAWGNPSPKMTCRRKADGALLPIGVVKSVKQEMNGTYVCHAFSSHG. The helical transmembrane segment at 486-509 threads the bilayer; that stretch reads WTIIILVPVLLVIVGLVMAASYVY. At 510–537 the chain is on the cytoplasmic side; sequence NRQRKIRIYKLQKAQEEAIKLKGQAPPP.

This sequence belongs to the immunoglobulin superfamily. ICAM family. In terms of assembly, homodimer. Interacts with MUC1 and promotes cell aggregation in epithelial cells. Interacts with ARHGEF26/SGEF. Interacts (on T cell side) with CD81, CD247 and CD9 at immunological synapses between antigen-presenting cells and T cells. Monoubiquitinated, which is promoted by MARCH9 and leads to endocytosis. In terms of tissue distribution, expressed at low level on a subpopulation of lymphocytes, macrophages, and endothelial cells, but is strongly induced on these cells, and on fibroblasts and epithelial cells.

The protein resides in the membrane. Its function is as follows. ICAM proteins are ligands for the leukocyte adhesion protein LFA-1 (integrin alpha-L/beta-2). During leukocyte trans-endothelial migration, ICAM1 engagement promotes the assembly of endothelial apical cups through ARHGEF26/SGEF and RHOG activation. This chain is Intercellular adhesion molecule 1 (Icam1), found in Mus musculus (Mouse).